The primary structure comprises 92 residues: Small ribosomal subunit protein uS19c (92 aa).

The protein belongs to the universal ribosomal protein uS19 family.

It is found in the plastid. The protein resides in the chloroplast. Protein S19 forms a complex with S13 that binds strongly to the 16S ribosomal RNA. This Amborella trichopoda protein is Small ribosomal subunit protein uS19c.